Reading from the N-terminus, the 159-residue chain is Probable chemoreceptor glutamine deamidase CheD 1 (159 aa).

This sequence belongs to the CheD family.

It carries out the reaction L-glutaminyl-[protein] + H2O = L-glutamyl-[protein] + NH4(+). Probably deamidates glutamine residues to glutamate on methyl-accepting chemotaxis receptors (MCPs), playing an important role in chemotaxis. This chain is Probable chemoreceptor glutamine deamidase CheD 1, found in Methanosarcina acetivorans (strain ATCC 35395 / DSM 2834 / JCM 12185 / C2A).